Here is a 186-residue protein sequence, read N- to C-terminus: Tumor necrosis factor alpha-induced protein 8-like protein 1 (186 aa).

The protein belongs to the TNFAIP8 family. Interacts with FBXW5; TNFAIP8L1 competes with TSC2 to bind FBXW5 increasing TSC2 stability by preventing its ubiquitination.

Its subcellular location is the cytoplasm. In terms of biological role, acts as a negative regulator of mTOR activity. This chain is Tumor necrosis factor alpha-induced protein 8-like protein 1 (TNFAIP8L1), found in Bos taurus (Bovine).